The chain runs to 219 residues: Probable cutinase 4 (219 aa).

Residues 1–17 (MILPSLLVASLSALAAA) form the signal peptide. 2 cysteine pairs are disulfide-bonded: cysteine 41–cysteine 120 and cysteine 67–cysteine 81. An N-linked (GlcNAc...) asparagine glycan is attached at asparagine 99. Catalysis depends on serine 131, which acts as the Nucleophile. An intrachain disulfide couples cysteine 182 to cysteine 189. Aspartate 186 is an active-site residue. Histidine 199 (proton donor/acceptor) is an active-site residue.

This sequence belongs to the cutinase family.

It localises to the secreted. It carries out the reaction cutin + H2O = cutin monomers.. Its function is as follows. Catalyzes the hydrolysis of complex carboxylic polyesters found in the cell wall of plants. Degrades cutin, a macromolecule that forms the structure of the plant cuticle. The polypeptide is Probable cutinase 4 (Aspergillus terreus (strain NIH 2624 / FGSC A1156)).